Here is a 362-residue protein sequence, read N- to C-terminus: 3-isopropylmalate dehydrogenase (362 aa).

Gly77–Glu88 is a binding site for NAD(+). Residues Arg95, Arg105, Arg134, and Asp223 each contribute to the substrate site. Mg(2+) contacts are provided by Asp223, Asp248, and Asp252. Position 287-298 (Gly287–Asn298) interacts with NAD(+).

It belongs to the isocitrate and isopropylmalate dehydrogenases family. Homodimer. Mg(2+) serves as cofactor. It depends on Mn(2+) as a cofactor.

It is found in the cytoplasm. It catalyses the reaction (2R,3S)-3-isopropylmalate + NAD(+) = 4-methyl-2-oxopentanoate + CO2 + NADH. It participates in amino-acid biosynthesis; L-leucine biosynthesis; L-leucine from 3-methyl-2-oxobutanoate: step 3/4. In terms of biological role, catalyzes the oxidation of 3-carboxy-2-hydroxy-4-methylpentanoate (3-isopropylmalate) to 3-carboxy-4-methyl-2-oxopentanoate. The product decarboxylates to 4-methyl-2 oxopentanoate. The sequence is that of 3-isopropylmalate dehydrogenase (LEU2) from Zygosaccharomyces rouxii (strain ATCC 2623 / CBS 732 / NBRC 1130 / NCYC 568 / NRRL Y-229).